A 286-amino-acid chain; its full sequence is Urease accessory protein UreD (286 aa).

It belongs to the UreD family. In terms of assembly, ureD, UreF and UreG form a complex that acts as a GTP-hydrolysis-dependent molecular chaperone, activating the urease apoprotein by helping to assemble the nickel containing metallocenter of UreC. The UreE protein probably delivers the nickel.

It localises to the cytoplasm. Its function is as follows. Required for maturation of urease via the functional incorporation of the urease nickel metallocenter. This Rhodopseudomonas palustris (strain BisA53) protein is Urease accessory protein UreD.